Reading from the N-terminus, the 324-residue chain is Phospho-N-acetylmuramoyl-pentapeptide-transferase (324 aa).

10 helical membrane passes run 9–29, 53–73, 77–97, 117–137, 147–167, 176–196, 201–221, 227–247, 253–273, and 304–324; these read TFAVAFIITVIGVPLFIPFLV, TMGAVVFITAMLISFLVFSFI, VSAATWLLFIALALFGALGFL, FLGQVVISILFYLVYHFNDFA, IEVDLGWFFVIFILFWLVGFS, LDGLVSGLSVIAFSAFGVIAF, MDVAIFCFAIVGGMLGFLLFN, IFMGDTGSLALGGSIAAISIL, LLLLIGIIFVIETASVILQVF, and VLTFWGIGLVGAIISVCVVIF.

It belongs to the glycosyltransferase 4 family. MraY subfamily. Mg(2+) serves as cofactor.

Its subcellular location is the cell membrane. The catalysed reaction is UDP-N-acetyl-alpha-D-muramoyl-L-alanyl-gamma-D-glutamyl-meso-2,6-diaminopimeloyl-D-alanyl-D-alanine + di-trans,octa-cis-undecaprenyl phosphate = di-trans,octa-cis-undecaprenyl diphospho-N-acetyl-alpha-D-muramoyl-L-alanyl-D-glutamyl-meso-2,6-diaminopimeloyl-D-alanyl-D-alanine + UMP. Its pathway is cell wall biogenesis; peptidoglycan biosynthesis. Catalyzes the initial step of the lipid cycle reactions in the biosynthesis of the cell wall peptidoglycan: transfers peptidoglycan precursor phospho-MurNAc-pentapeptide from UDP-MurNAc-pentapeptide onto the lipid carrier undecaprenyl phosphate, yielding undecaprenyl-pyrophosphoryl-MurNAc-pentapeptide, known as lipid I. This chain is Phospho-N-acetylmuramoyl-pentapeptide-transferase, found in Listeria monocytogenes serovar 1/2a (strain ATCC BAA-679 / EGD-e).